The sequence spans 362 residues: Caspase activity and apoptosis inhibitor 1 (362 aa).

A compositionally biased stretch (basic residues) spans 1–14 (MTGKKSSREKRRKR). 2 disordered regions span residues 1 to 44 (MTGK…SGCG) and 65 to 101 (TGGGSGGSCWGGSSVERGERRKRRSTDSSSSVSGSLQ). Residues 19 to 32 (AAAALAAPDLVPAV) are compositionally biased toward low complexity. 2 stretches are compositionally biased toward gly residues: residues 33–44 (GGSGSGSTSGCG) and 65–74 (TGGGSGGSCW). S89 bears the Phosphoserine mark. T90 carries the post-translational modification Phosphothreonine. K105 is covalently cross-linked (Glycyl lysine isopeptide (Lys-Gly) (interchain with G-Cter in SUMO2)). 2 positions are modified to phosphoserine: S121 and S204. Disordered regions lie at residues 226–251 (SCVDSTSSLRENKQPEGLELKQGKGE), 269–291 (GPCNEEAAAPEVPENTVQSEAGQ), and 309–332 (LAESSPKEPKAATLTVPPPEDVQP). Over residues 235 to 251 (RENKQPEGLELKQGKGE) the composition is skewed to basic and acidic residues. Over residues 273–282 (EEAAAPEVPE) the composition is skewed to low complexity. A coiled-coil region spans residues 282-312 (ENTVQSEAGQIDDLEKDIEKSVNEILGLAES). Residue S313 is modified to Phosphoserine.

Anti-apoptotic protein that modulates a caspase-10 dependent mitochondrial caspase-3/9 feedback amplification loop. The polypeptide is Caspase activity and apoptosis inhibitor 1 (CAAP1) (Bos taurus (Bovine)).